A 225-amino-acid chain; its full sequence is uncharacterized protein (225 aa).

It belongs to the mimivirus L31/R44 family.

This is an uncharacterized protein from Acanthamoeba polyphaga (Amoeba).